The following is an 810-amino-acid chain: Lon protease (810 aa).

The 194-residue stretch at L8–L201 folds into the Lon N-terminal domain. Position 353 to 360 (G353 to T360) interacts with ATP. One can recognise a Lon proteolytic domain in the interval N589–E770. Catalysis depends on residues S676 and K719.

This sequence belongs to the peptidase S16 family. In terms of assembly, homohexamer. Organized in a ring with a central cavity.

The protein resides in the cytoplasm. The catalysed reaction is Hydrolysis of proteins in presence of ATP.. Its function is as follows. ATP-dependent serine protease that mediates the selective degradation of mutant and abnormal proteins as well as certain short-lived regulatory proteins. Required for cellular homeostasis and for survival from DNA damage and developmental changes induced by stress. Degrades polypeptides processively to yield small peptide fragments that are 5 to 10 amino acids long. Binds to DNA in a double-stranded, site-specific manner. This chain is Lon protease, found in Desulforamulus reducens (strain ATCC BAA-1160 / DSM 100696 / MI-1) (Desulfotomaculum reducens).